Consider the following 161-residue polypeptide: uncharacterized protein (161 aa).

Transmembrane regions (helical) follow at residues 13-35 (VAAV…PHAN) and 40-62 (VFSA…PFIS).

Its subcellular location is the cell membrane. This is an uncharacterized protein from Archaeoglobus fulgidus (strain ATCC 49558 / DSM 4304 / JCM 9628 / NBRC 100126 / VC-16).